Consider the following 184-residue polypeptide: MSWRSESIWIEFITGSRKTSNFCWAFILFLGSLGFLLVGTSSYLGRNVISLFPSQEIIFFPQGIVMSFYGIAGLFISCYLWCTILWNVGSGYDLFDRKEGIVRIFRWGFPGKSRRIFLRFFMKDIQSIRIEVKEGVSARRVLYMEIRGQGAIPLIRTDENFTTREIEQKAAELAYFLRVPIEVF.

A run of 2 helical transmembrane segments spans residues 22-42 (FCWA…GTSS) and 57-77 (IIFF…LFIS).

It belongs to the Ycf4 family.

It is found in the plastid. Its subcellular location is the chloroplast thylakoid membrane. Seems to be required for the assembly of the photosystem I complex. This Olimarabidopsis pumila (Dwarf rocket) protein is Photosystem I assembly protein Ycf4.